The chain runs to 140 residues: Putative pre-16S rRNA nuclease (140 aa).

The protein belongs to the YqgF nuclease family.

It localises to the cytoplasm. Its function is as follows. Could be a nuclease involved in processing of the 5'-end of pre-16S rRNA. The sequence is that of Putative pre-16S rRNA nuclease from Moorella thermoacetica (strain ATCC 39073 / JCM 9320).